We begin with the raw amino-acid sequence, 440 residues long: Xylose isomerase (440 aa).

Active-site residues include His-100 and Asp-103. 7 residues coordinate Mg(2+): Glu-231, Glu-267, His-270, Asp-295, Asp-306, Asp-308, and Asp-338.

This sequence belongs to the xylose isomerase family. As to quaternary structure, homotetramer. Mg(2+) serves as cofactor.

It is found in the cytoplasm. The enzyme catalyses alpha-D-xylose = alpha-D-xylulofuranose. The protein is Xylose isomerase of Burkholderia thailandensis (strain ATCC 700388 / DSM 13276 / CCUG 48851 / CIP 106301 / E264).